Consider the following 392-residue polypeptide: Flagellar P-ring protein (392 aa).

The first 38 residues, 1–38, serve as a signal peptide directing secretion; sequence MKPFARRALLTAEPIRALLLAASLLAATLGLMPAEAFG.

The protein belongs to the FlgI family. As to quaternary structure, the basal body constitutes a major portion of the flagellar organelle and consists of four rings (L,P,S, and M) mounted on a central rod.

Its subcellular location is the periplasm. It is found in the bacterial flagellum basal body. Its function is as follows. Assembles around the rod to form the L-ring and probably protects the motor/basal body from shearing forces during rotation. This is Flagellar P-ring protein from Paramagnetospirillum magneticum (strain ATCC 700264 / AMB-1) (Magnetospirillum magneticum).